The sequence spans 710 residues: Tubulin polyglutamylase TTLL11 (710 aa).

The segment at 41-135 (VRVDAGAAGE…QRPVTVDSSK (95 aa)) is disordered. Basic and acidic residues predominate over residues 51–60 (PECKAGEEQP). Low complexity predominate over residues 64 to 82 (APAPAQPSAAEEGNTQVLQ). Over residues 83 to 93 (RPPPTLPPSKP) the composition is skewed to pro residues. Residues 123 to 135 (NGSQRPVTVDSSK) show a composition bias toward polar residues. In terms of domain architecture, TTL spans 128–480 (PVTVDSSKAR…EVKVAVIRDT (353 aa)). ATP is bound by residues Lys-249, 255–256 (QG), 282–285 (QEYI), and 295–297 (KFD). Gln-255 lines the a protein pocket. Arg-321 is an L-glutamate binding site. 343–344 (TN) lines the ATP pocket. L-glutamate-binding residues include Tyr-345, Ser-346, and Lys-365. Asp-428, Glu-441, and Asn-443 together coordinate Mg(2+). The interval 467 to 538 (LVDEEVKVAV…SICLKQVFPK (72 aa)) is c-MTBD region. L-glutamate is bound at residue Lys-473. A disordered region spans residues 665 to 710 (GVPSGGRPPHRGPPQEPSPSAQPAGDNPPPRTSCANKLSHPRHTLS).

Belongs to the tubulin--tyrosine ligase family. Requires Mg(2+) as cofactor.

It localises to the cytoplasm. It is found in the cytoskeleton. Its subcellular location is the cilium basal body. It catalyses the reaction L-glutamyl-[protein] + L-glutamate + ATP = gamma-L-glutamyl-L-glutamyl-[protein] + ADP + phosphate + H(+). It carries out the reaction (L-glutamyl)(n)-gamma-L-glutamyl-L-glutamyl-[protein] + L-glutamate + ATP = (L-glutamyl)(n+1)-gamma-L-glutamyl-L-glutamyl-[protein] + ADP + phosphate + H(+). Its function is as follows. Polyglutamylase which modifies tubulin, generating polyglutamate side chains of variable lengths on the gamma-carboxyl group of specific glutamate residues within the C-terminal tail of tubulin. Preferentially mediates ATP-dependent polyglutamate long side-chain elongation over the initiation step of the polyglutamylation reaction. Preferentially modifies the alpha-tubulin tail over a beta-tail. Required for CCSAP localization to both spindle and cilia microtubules. Promotes tubulin polyglutamylation which stimulates spastin/SPAST-mediated microtubule severing, thereby regulating microtubule functions. This is Tubulin polyglutamylase TTLL11 from Homo sapiens (Human).